A 416-amino-acid polypeptide reads, in one-letter code: Caspase-9 (416 aa).

The CARD domain maps to 1 to 92; the sequence is MDEADRRLLR…DMLASFLRTN (92 aa). Thr125 is modified (phosphothreonine; by MAPK1). A Phosphotyrosine; by ABL1 modification is found at Tyr153. Active-site residues include His237 and Cys287. A disordered region spans residues 294–320; the sequence is HGFEVASTSPEDESPGSNPEPDATPFQ. Phosphoserine is present on residues Ser302, Ser307, and Ser310. The propeptide occupies 316–330; sequence ATPFQEGLRTFDQLD. Arg355 is modified ((Microbial infection) ADP-riboxanated arginine).

This sequence belongs to the peptidase C14A family. Heterotetramer that consists of two anti-parallel arranged heterodimers, each one formed by a 35 kDa (p35) and a 10 kDa (p10) subunit. Caspase-9 and APAF1 bind to each other via their respective NH2-terminal CED-3 homologous domains in the presence of cytochrome C and ATP. Interacts (inactive form) with EFHD2. Interacts with HAX1. Interacts with BIRC2/c-IAP1, XIAP/BIRC4, BIRC5/survivin, BIRC6/bruce and BIRC7/livin. Interacts with ABL1 (via SH3 domain); the interaction is direct and increases in the response of cells to genotoxic stress and ABL1/c-Abl activation. Interacts with BCL2L10. Interacts with NleF from pathogenic E.coli. In terms of processing, cleavages at Asp-315 by granzyme B and at Asp-330 by caspase-3 generate the two active subunits. Caspase-8 and -10 can also be involved in these processing events. Post-translationally, phosphorylated at Thr-125 by MAPK1/ERK2. Phosphorylation at Thr-125 is sufficient to block caspase-9 processing and subsequent caspase-3 activation. Phosphorylation on Tyr-153 by ABL1/c-Abl; occurs in the response of cells to DNA damage. (Microbial infection) ADP-riboxanation by C.violaceum CopC blocks CASP9 processing, preventing CASP9 activation and ability to mediate intrinsic apoptosis. In terms of processing, ubiquitinated by BIRC6; this activity is inhibited by DIABLO/SMAC. Ubiquitous, with highest expression in the heart, moderate expression in liver, skeletal muscle, and pancreas. Low levels in all other tissues. Within the heart, specifically expressed in myocytes.

It catalyses the reaction Strict requirement for an Asp residue at position P1 and with a marked preference for His at position P2. It has a preferred cleavage sequence of Leu-Gly-His-Asp-|-Xaa.. Inhibited by the effector protein NleF that is produced by pathogenic E.coli; this inhibits apoptosis. Inhibited by BIRC6; following inhibition of BIRC6-caspase binding by DIABLO/SMAC, BIRC6 is subjected to caspase cleavage, leading to an increase in active caspases. Involved in the activation cascade of caspases responsible for apoptosis execution. Binding of caspase-9 to Apaf-1 leads to activation of the protease which then cleaves and activates effector caspases caspase-3 (CASP3) or caspase-7 (CASP7). Promotes DNA damage-induced apoptosis in a ABL1/c-Abl-dependent manner. Proteolytically cleaves poly(ADP-ribose) polymerase (PARP). Cleaves BIRC6 following inhibition of BIRC6-caspase binding by DIABLO/SMAC. Its function is as follows. Lacks activity is an dominant-negative inhibitor of caspase-9. In Homo sapiens (Human), this protein is Caspase-9 (CASP9).